The chain runs to 352 residues: tRNA uridine(34) hydroxylase (352 aa).

The Rhodanese domain occupies Asp-146–Leu-240. Cys-200 functions as the Cysteine persulfide intermediate in the catalytic mechanism. A compositionally biased stretch (basic and acidic residues) spans Glu-315–Gly-328. A disordered region spans residues Glu-315 to Glu-352. Polar residues predominate over residues Gly-342–Glu-352.

It belongs to the TrhO family.

It catalyses the reaction uridine(34) in tRNA + AH2 + O2 = 5-hydroxyuridine(34) in tRNA + A + H2O. Catalyzes oxygen-dependent 5-hydroxyuridine (ho5U) modification at position 34 in tRNAs. The protein is tRNA uridine(34) hydroxylase of Photorhabdus laumondii subsp. laumondii (strain DSM 15139 / CIP 105565 / TT01) (Photorhabdus luminescens subsp. laumondii).